A 130-amino-acid polypeptide reads, in one-letter code: Protachykinin-1 (130 aa).

Residues 1–19 (MKILVAVAVIFFISTQLSA) form the signal peptide. The propeptide occupies 20–56 (EEIGANDDFNYWSDWSDSDQIKEEMPEPFEHLLQRIA). 2 positions are modified to methionine amide: Met-68 and Met-107.

This sequence belongs to the tachykinin family. Post-translationally, the substance P form is cleaved at Pro-59 by the prolyl endopeptidase FAP (seprase) activity (in vitro). Substance P is also cleaved and degraded by Angiotensin-converting enzyme (ACE) and neprilysin (MME).

Its subcellular location is the secreted. Functionally, tachykinins are active peptides which excite neurons, evoke behavioral responses, are potent vasodilators and secretagogues, and contract (directly or indirectly) many smooth muscles. This chain is Protachykinin-1 (TAC1), found in Bos taurus (Bovine).